The chain runs to 476 residues: Ribulose bisphosphate carboxylase large chain (476 aa).

The substrate site is built by asparagine 124 and threonine 174. The Proton acceptor role is filled by lysine 176. Lysine 178 lines the substrate pocket. Residues lysine 202, aspartate 204, and glutamate 205 each contribute to the Mg(2+) site. Lysine 202 carries the post-translational modification N6-carboxylysine. The Proton acceptor role is filled by histidine 295. Substrate-binding residues include arginine 296, histidine 328, and serine 380.

The protein belongs to the RuBisCO large chain family. Type I subfamily. Heterohexadecamer of 8 large chains and 8 small chains; disulfide-linked. The disulfide link is formed within the large subunit homodimers. It depends on Mg(2+) as a cofactor. In terms of processing, the disulfide bond which can form in the large chain dimeric partners within the hexadecamer appears to be associated with oxidative stress and protein turnover.

It is found in the carboxysome. It catalyses the reaction 2 (2R)-3-phosphoglycerate + 2 H(+) = D-ribulose 1,5-bisphosphate + CO2 + H2O. The enzyme catalyses D-ribulose 1,5-bisphosphate + O2 = 2-phosphoglycolate + (2R)-3-phosphoglycerate + 2 H(+). RuBisCO catalyzes two reactions: the carboxylation of D-ribulose 1,5-bisphosphate, the primary event in carbon dioxide fixation, as well as the oxidative fragmentation of the pentose substrate in the photorespiration process. Both reactions occur simultaneously and in competition at the same active site. In Cyanothece sp. (strain PCC 7425 / ATCC 29141), this protein is Ribulose bisphosphate carboxylase large chain.